The primary structure comprises 287 residues: Energy-coupling factor transporter ATP-binding protein EcfA (287 aa).

Residues phenylalanine 19 to aspartate 252 form the ABC transporter domain. Glycine 52–serine 59 serves as a coordination point for ATP.

This sequence belongs to the ABC transporter superfamily. Energy-coupling factor EcfA family. As to quaternary structure, forms a stable energy-coupling factor (ECF) transporter complex composed of 2 membrane-embedded substrate-binding proteins (S component), 2 ATP-binding proteins (A component) and 2 transmembrane proteins (T component).

It localises to the cell membrane. Functionally, ATP-binding (A) component of a common energy-coupling factor (ECF) ABC-transporter complex. Unlike classic ABC transporters this ECF transporter provides the energy necessary to transport a number of different substrates. The protein is Energy-coupling factor transporter ATP-binding protein EcfA of Malacoplasma penetrans (strain HF-2) (Mycoplasma penetrans).